We begin with the raw amino-acid sequence, 98 residues long: MNEERLLKVLVGPHVSEKATVLADAANQHVFKVAPDATRGEIKAAVEKFFEVQVSSVRVVNMKGKRKRFGRFEGRRNNWKKAYVTLAAGQDIALAGSE.

Belongs to the universal ribosomal protein uL23 family. Part of the 50S ribosomal subunit. Contacts protein L29, and trigger factor when it is bound to the ribosome.

Its function is as follows. One of the early assembly proteins it binds 23S rRNA. One of the proteins that surrounds the polypeptide exit tunnel on the outside of the ribosome. Forms the main docking site for trigger factor binding to the ribosome. This Thioalkalivibrio sulfidiphilus (strain HL-EbGR7) protein is Large ribosomal subunit protein uL23.